A 420-amino-acid polypeptide reads, in one-letter code: MQAEIIAVGTEILLGQITNTNSTYIARGLAELGIDSYYQTVVGDNRQRLSTVIEIAAQRNDLVILTGGLGPTKDDLTKQTLAHYLNVALVEDQAAMQKITAWFATNDKVMTANNRLQALYPAGAQPLTNHNGMAVGAFYQSENSADFLLLPGPPRELAVMFDSEAKPKLAAAYGEQAQIYSRVMRFYGISESELATRLQPLIDEQQAVTIAPYAKTNEVTLRLSAQAMTETAARGMIDKVDHQIKATVGPYFYGYGDDNSLVTTVINQMIAAKLSITAAESLTAGLFQSTIGSVSGVSAIFPGGFVTYANEAKHQLVNVPQAIIDAEGVVSEATAKAMASGAKQQLNTDVGISFTGVAGPGTLGGQPAGTVWIGLAYRDRPVKAKQYHFAGNRQQIRERSVMAGLDLLRHALNEDTDLKK.

Belongs to the CinA family.

The polypeptide is Putative competence-damage inducible protein (Lactiplantibacillus plantarum (strain ATCC BAA-793 / NCIMB 8826 / WCFS1) (Lactobacillus plantarum)).